Consider the following 283-residue polypeptide: Non-selective voltage-gated ion channel VDAC1 (283 aa).

N-acetylalanine is present on alanine 2. ATP is bound at residue lysine 12. A Glycyl lysine isopeptide (Lys-Gly) (interchain with G-Cter in ubiquitin) cross-link involves residue lysine 12. Serine 13 carries the phosphoserine modification. Residue threonine 19 is modified to Phosphothreonine. Lysine 20 is an ATP binding site. Residue lysine 20 is modified to N6-acetyllysine; alternate. The residue at position 20 (lysine 20) is an N6-succinyllysine; alternate. A Glycyl lysine isopeptide (Lys-Gly) (interchain with G-Cter in ubiquitin); alternate cross-link involves residue lysine 20. 2 beta stranded membrane-spanning segments follow: residues leucine 26–serine 35 and leucine 39–alanine 47. Glycyl lysine isopeptide (Lys-Gly) (interchain with G-Cter in ubiquitin) cross-links involve residues lysine 53 and lysine 61. Residues valine 54–tryptophan 64 traverse the membrane as a beta stranded segment. Tyrosine 67 carries the post-translational modification Phosphotyrosine. The next 3 beta stranded transmembrane spans lie at leucine 69 to asparagine 76, threonine 80 to aspartate 89, and leucine 95 to serine 104. Threonine 107 is subject to Phosphothreonine. The residue at position 109 (lysine 109) is an N6-acetyllysine; alternate. Residue lysine 109 forms a Glycyl lysine isopeptide (Lys-Gly) (interchain with G-Cter in ubiquitin); alternate linkage. A Glycyl lysine isopeptide (Lys-Gly) (interchain with G-Cter in ubiquitin) cross-link involves residue lysine 110. The next 4 beta stranded transmembrane spans lie at asparagine 111–arginine 120, isoleucine 123–aspartate 130, serine 137–glycine 145, and leucine 150–glutamate 158. Serine 137 is subject to Phosphoserine. A Glycyl lysine isopeptide (Lys-Gly) (interchain with G-Cter in ubiquitin) cross-link involves residue lysine 161. Transmembrane regions (beta stranded) follow at residues arginine 163–threonine 175, phenylalanine 178–asparagine 185, glutamate 189–valine 198, leucine 202–threonine 211, arginine 218–valine 227, and alanine 231–asparagine 238. The residue at position 193 (serine 193) is a Phosphoserine; by NEK1. Serine 240 is subject to Phosphoserine. Leucine 242–glycine 244 is an NAD(+) binding site. A beta stranded membrane pass occupies residues leucine 242–leucine 251. Residue lysine 252 is modified to N6-acetyllysine. The chain crosses the membrane as a beta stranded span at residues glycine 254–leucine 263. Serine 260–aspartate 264 serves as a coordination point for NAD(+). Lysine 266 is subject to N6-acetyllysine; alternate. Lysine 266 is covalently cross-linked (Glycyl lysine isopeptide (Lys-Gly) (interchain with G-Cter in ubiquitin); alternate). Residues histidine 273–glutamine 282 form a beta stranded membrane-spanning segment. Lysine 274 is covalently cross-linked (Glycyl lysine isopeptide (Lys-Gly) (interchain with G-Cter in ubiquitin)).

This sequence belongs to the eukaryotic mitochondrial porin family. As to quaternary structure, homodimer and homotrimer; in response to cyclic AMP or calcium; oligomerization is required for scramblase activity. Component of the mitochondrial permeability transition pore complex (mPTPC), at least composed of SPG7, VDAC1 and PPIF. Interacts with SPG7, NIPSNAP2 and SLC25A30. Interacts with hexokinases including HK1. The HK1-VDAC1 complex interacts with ATF2. Interacts with BCL2L1. Interacts with BAK1. Interacts with RTL10/BOP (via BH3 domain). Interacts with amyloid-beta and APP; induces VDAC1 dephosphorylation. Interacts with TMEM41B. Interacts with BCAP31. Interacts with HSPA9; this interaction couples ITPR1 to VDAC1. In terms of processing, phosphorylation at Ser-193 by NEK1 promotes the closed conformational state preventing excessive mitochondrial membrane permeability and subsequent apoptotic cell death after injury. Phosphorylation by the AKT-GSK3B axis stabilizes the protein probably by preventing ubiquitin-mediated proteasomal degradation. Post-translationally, ubiquitinated. Undergoes monoubiquitination and polyubiquitination by PRKN; monoubiquitination at Lys-274 inhibits apoptosis, whereas polyubiquitination leads to its degradation and promotes mitophagy. Deubiquitinated by USP30. As to expression, widely expressed. High levels in heart and kidney with lower levels in brain and ascitic tumor. Very low levels in liver.

The protein localises to the mitochondrion outer membrane. The protein resides in the cell membrane. Its subcellular location is the membrane raft. The catalysed reaction is Ca(2+)(in) = Ca(2+)(out). It catalyses the reaction Na(+)(in) = Na(+)(out). The enzyme catalyses chloride(in) = chloride(out). It carries out the reaction Mg(2+)(in) = Mg(2+)(out). The catalysed reaction is K(+)(in) = K(+)(out). It catalyses the reaction ATP(in) = ATP(out). The enzyme catalyses L-glutamate(out) = L-glutamate(in). It carries out the reaction dopamine(out) = dopamine(in). The catalysed reaction is acetylcholine(in) = acetylcholine(out). It catalyses the reaction Fe(III)-[cytochrome c](out) = Fe(III)-[cytochrome c](in). The enzyme catalyses a 1,2-diacyl-sn-glycero-3-phosphocholine(in) = a 1,2-diacyl-sn-glycero-3-phosphocholine(out). It carries out the reaction a 1,2-diacyl-sn-glycero-3-phospho-L-serine(in) = a 1,2-diacyl-sn-glycero-3-phospho-L-serine(out). Inhibited by nitric oxide. Voltage-gated ion channel activity is inhibited by lanthanum(3+) and ruthenium red. Mitochondrial calcium transport is inhibited by lanthanum(3+), ruthenium red and Ru360. Functionally, non-selective voltage-gated ion channel that mediates the transport of anions and cations through the mitochondrion outer membrane and plasma membrane. The channel at the outer mitochondrial membrane allows diffusion of small hydrophilic molecules; in the plasma membrane it is involved in cell volume regulation and apoptosis. It adopts an open conformation at low or zero membrane potential and a closed conformation at potentials above 30-40 mV. The open state has a weak anion selectivity whereas the closed state is cation-selective. Binds various signaling molecules, including the sphingolipid ceramide, the phospholipid phosphatidylcholine, and the sterols cholesterol and oxysterol. In depolarized mitochondria, acts downstream of PRKN and PINK1 to promote mitophagy or prevent apoptosis; polyubiquitination by PRKN promotes mitophagy, while monoubiquitination by PRKN decreases mitochondrial calcium influx which ultimately inhibits apoptosis. May participate in the formation of the permeability transition pore complex (PTPC) responsible for the release of mitochondrial products that triggers apoptosis. May mediate ATP export from cells. Part of a complex composed of HSPA9, ITPR1 and VDAC1 that regulates mitochondrial calcium-dependent apoptosis by facilitating calcium transport from the ER lumen to the mitochondria intermembrane space thus providing calcium for the downstream calcium channel MCU that directly releases it into mitochondria matrix. Its function is as follows. Catalyzes the scrambling of phospholipids across the outer mitochondrial membrane; the mechanism is unrelated to channel activity and is capable of translocating both anionic and zwitterionic phospholipids. The polypeptide is Non-selective voltage-gated ion channel VDAC1 (Rattus norvegicus (Rat)).